The primary structure comprises 277 residues: MSEEGGVEVKLLKPRKPLPDVGEIVVGTVQEVHDYGAYLILDEYGGVRAFLPWSEIASRAVRNIHAVLKPRQKVVVKVIRVYKKRGQVDVSLKRVMDSEKKRKMMFYKRYLKAATLVELIAEKLGKSVDEAYREVLWKLEDAYGDPMKGLEAAVLQGREALEKAGVPEEWIEPLLETAKTHVRVKTVKITFYLTLRSMAGDGVERVRKVLEAAKSQIESFKDSKVVARIYTVGAPKYRVELQGYNYKTLEKALEKMVEAARKTASKLGVEFSFERED.

The S1 motif domain maps to glycine 22–lysine 93.

The protein belongs to the eIF-2-alpha family. As to quaternary structure, heterotrimer composed of an alpha, a beta and a gamma chain.

Functionally, eIF-2 functions in the early steps of protein synthesis by forming a ternary complex with GTP and initiator tRNA. In Aeropyrum pernix (strain ATCC 700893 / DSM 11879 / JCM 9820 / NBRC 100138 / K1), this protein is Translation initiation factor 2 subunit alpha (eif2a).